The sequence spans 354 residues: Ion-translocating oxidoreductase complex subunit D (354 aa).

4 consecutive transmembrane segments (helical) span residues 19–39 (IMLL…YYFG), 40–60 (FGVL…EFLV), 77–99 (AAVT…LSFF), and 119–139 (IFNP…ILMT). FMN phosphoryl threonine is present on T187. 5 consecutive transmembrane segments (helical) span residues 221–241 (WISI…FNVI), 245–265 (IPVS…YFFK), 268–288 (MYYP…FFIA), 295–315 (SITK…IWLI), and 319–339 (GNYP…VPLI).

This sequence belongs to the NqrB/RnfD family. In terms of assembly, the complex is composed of six subunits: RnfA, RnfB, RnfC, RnfD, RnfE and RnfG. FMN serves as cofactor.

It is found in the cell inner membrane. Functionally, part of a membrane-bound complex that couples electron transfer with translocation of ions across the membrane. In Buchnera aphidicola subsp. Baizongia pistaciae (strain Bp), this protein is Ion-translocating oxidoreductase complex subunit D.